Consider the following 134-residue polypeptide: Transcription antitermination protein NusB (134 aa).

It belongs to the NusB family.

Involved in transcription antitermination. Required for transcription of ribosomal RNA (rRNA) genes. Binds specifically to the boxA antiterminator sequence of the ribosomal RNA (rrn) operons. In Shewanella loihica (strain ATCC BAA-1088 / PV-4), this protein is Transcription antitermination protein NusB.